The chain runs to 636 residues: Cysteine-rich receptor-like protein kinase 24 (636 aa).

The signal sequence occupies residues 1–20 (MVKFLVIFWFVVISFSHVSA). Gnk2-homologous domains are found at residues 21–124 (QVCL…NRSF) and 130–235 (MEIL…LYPF). Residues 21–254 (QVCLERSGFF…RQKDGKSIST (234 aa)) lie on the Extracellular side of the membrane. Asn-33, Asn-50, Asn-98, Asn-101, Asn-121, Asn-137, Asn-145, and Asn-197 each carry an N-linked (GlcNAc...) asparagine glycan. Residues 255-275 (GAIVAIIVVPILLLALGVGLW) form a helical membrane-spanning segment. Topologically, residues 276-636 (KRRKAYKTKT…SVSVTCVSPR (361 aa)) are cytoplasmic. One can recognise a Protein kinase domain in the interval 312 to 585 (FHNVNKLGHG…TMSTVFHMLT (274 aa)). ATP contacts are provided by residues 318–326 (LGHGGFGEV) and Lys-340. The active-site Proton acceptor is Asp-437.

The protein belongs to the protein kinase superfamily. Ser/Thr protein kinase family. CRK subfamily.

Its subcellular location is the membrane. It carries out the reaction L-seryl-[protein] + ATP = O-phospho-L-seryl-[protein] + ADP + H(+). The enzyme catalyses L-threonyl-[protein] + ATP = O-phospho-L-threonyl-[protein] + ADP + H(+). The sequence is that of Cysteine-rich receptor-like protein kinase 24 (CRK24) from Arabidopsis thaliana (Mouse-ear cress).